The primary structure comprises 681 residues: Potassium-transporting ATPase ATP-binding subunit (681 aa).

4 helical membrane-spanning segments follow: residues 30-50 (LLVYVGAILATSLYFLGFFGI), 59-79 (LAIALILWFTVLFANFAEAIA), 216-236 (ILLVTLSIIFLAVSATLLPFT), and 255-275 (IALLVCLAPTTIGALLSSIGI). Asp306 (4-aspartylphosphate intermediate) is an active-site residue. ATP contacts are provided by residues Asp343, Glu347, 376–383 (FTATTRMS), and Lys394. 2 residues coordinate Mg(2+): Asp517 and Asp521. Transmembrane regions (helical) follow at residues 587-607 (FAIIPVLFYGIFPQLEALNLM), 615-635 (AILSAIIYNALIIIFLIPLSL), and 661-681 (LVAPFIAIKLIDMLLTVLGIV).

Belongs to the cation transport ATPase (P-type) (TC 3.A.3) family. Type IA subfamily. The system is composed of three essential subunits: KdpA, KdpB and KdpC.

The protein localises to the cell membrane. It carries out the reaction K(+)(out) + ATP + H2O = K(+)(in) + ADP + phosphate + H(+). Functionally, part of the high-affinity ATP-driven potassium transport (or Kdp) system, which catalyzes the hydrolysis of ATP coupled with the electrogenic transport of potassium into the cytoplasm. This subunit is responsible for energy coupling to the transport system and for the release of the potassium ions to the cytoplasm. The chain is Potassium-transporting ATPase ATP-binding subunit from Listeria welshimeri serovar 6b (strain ATCC 35897 / DSM 20650 / CCUG 15529 / CIP 8149 / NCTC 11857 / SLCC 5334 / V8).